A 346-amino-acid chain; its full sequence is UDP-3-O-acylglucosamine N-acyltransferase (346 aa).

His240 acts as the Proton acceptor in catalysis.

Belongs to the transferase hexapeptide repeat family. LpxD subfamily. Homotrimer.

It carries out the reaction a UDP-3-O-[(3R)-3-hydroxyacyl]-alpha-D-glucosamine + a (3R)-hydroxyacyl-[ACP] = a UDP-2-N,3-O-bis[(3R)-3-hydroxyacyl]-alpha-D-glucosamine + holo-[ACP] + H(+). It functions in the pathway bacterial outer membrane biogenesis; LPS lipid A biosynthesis. Its function is as follows. Catalyzes the N-acylation of UDP-3-O-acylglucosamine using 3-hydroxyacyl-ACP as the acyl donor. Is involved in the biosynthesis of lipid A, a phosphorylated glycolipid that anchors the lipopolysaccharide to the outer membrane of the cell. This chain is UDP-3-O-acylglucosamine N-acyltransferase, found in Bacteroides fragilis (strain YCH46).